The primary structure comprises 527 residues: MMTNFPWLTTIILFPIVASLLLPIIPDKDGKTVRWYSLIVGLIDFAIIIAAFCTGYDVNNPELQLVESYPWVPQLDLNWSVGADGLSMPLIILTGFITTLAIMAAWPVSFKPKLFYFLMLAMYGGQIAVFAVQDMLLFFLVWELELVPVYLILSIWGGKRRLYAATKFILYTAGGSLFILIAALTMAFYGDTVSFDMRTIALKDYAFNLQLLLYAAFLIAYAVKLPIFPLHTWLPDAHGEATAPAHMLLAGILLKMGGYALLRMNAGMLPDAHAVFAPVLVILGVVNIVYAALTSFAQRNLKRKIAYSSISHMGFVLIGMASFTDIGLSGAVLQMISHGLIGASLFFLVGATYDRTHTLILDEMGGVGQKMKKVFAMWTTCSMASLALPGMSGFVAEVMVFIGFATSDAYSSTFKVLVIFLSAVGVILTPIYLLSMLREILYGPENKKLVEHEVLKDAEPREVFIIGCLLVPIIGIGLYPKIVTQIYDATTVQLTARLRDSVPVLMGPEKVALTDVSELPTRAPEIK.

14 helical membrane-spanning segments follow: residues 5–25 (FPWLTTIILFPIVASLLLPII), 35–55 (WYSLIVGLIDFAIIIAAFCTG), 90–110 (LIILTGFITTLAIMAAWPVSF), 112–132 (PKLFYFLMLAMYGGQIAVFAV), 136–156 (LLFFLVWELELVPVYLILSIW), 168–188 (FILYTAGGSLFILIAALTMAF), 211–231 (LLLYAAFLIAYAVKLPIFPLH), 242–262 (TAPAHMLLAGILLKMGGYALL), 274–294 (AVFAPVLVILGVVNIVYAALT), 310–330 (ISHMGFVLIGMASFTDIGLSG), 331–351 (AVLQMISHGLIGASLFFLVGA), 386–406 (LALPGMSGFVAEVMVFIGFAT), 416–436 (VLVIFLSAVGVILTPIYLLSM), and 463–483 (VFIIGCLLVPIIGIGLYPKIV).

Belongs to the complex I subunit 4 family.

Its subcellular location is the cellular thylakoid membrane. It catalyses the reaction a plastoquinone + NADH + (n+1) H(+)(in) = a plastoquinol + NAD(+) + n H(+)(out). It carries out the reaction a plastoquinone + NADPH + (n+1) H(+)(in) = a plastoquinol + NADP(+) + n H(+)(out). NDH-1 shuttles electrons from NAD(P)H, via FMN and iron-sulfur (Fe-S) centers, to quinones in the respiratory chain. The immediate electron acceptor for the enzyme in this species is believed to be plastoquinone. Couples the redox reaction to proton translocation (for every two electrons transferred, four hydrogen ions are translocated across the cytoplasmic membrane), and thus conserves the redox energy in a proton gradient. The sequence is that of NAD(P)H-quinone oxidoreductase chain 4 1 from Trichodesmium erythraeum (strain IMS101).